We begin with the raw amino-acid sequence, 434 residues long: Trigger factor (434 aa).

In terms of domain architecture, PPIase FKBP-type spans 160 to 245 (GDKVKMNFVG…LTEVQAANLP (86 aa)).

It belongs to the FKBP-type PPIase family. Tig subfamily.

The protein localises to the cytoplasm. The catalysed reaction is [protein]-peptidylproline (omega=180) = [protein]-peptidylproline (omega=0). In terms of biological role, involved in protein export. Acts as a chaperone by maintaining the newly synthesized protein in an open conformation. Functions as a peptidyl-prolyl cis-trans isomerase. The chain is Trigger factor from Shewanella baltica (strain OS185).